The following is a 927-amino-acid chain: Valine--tRNA ligase (927 aa).

Positions P45–H55 match the 'HIGH' region motif. The 'KMSKS' region signature appears at K571 to S575. Residue K574 participates in ATP binding. The stretch at S856–A917 forms a coiled coil.

The protein belongs to the class-I aminoacyl-tRNA synthetase family. ValS type 1 subfamily. As to quaternary structure, monomer.

It localises to the cytoplasm. It carries out the reaction tRNA(Val) + L-valine + ATP = L-valyl-tRNA(Val) + AMP + diphosphate. In terms of biological role, catalyzes the attachment of valine to tRNA(Val). As ValRS can inadvertently accommodate and process structurally similar amino acids such as threonine, to avoid such errors, it has a 'posttransfer' editing activity that hydrolyzes mischarged Thr-tRNA(Val) in a tRNA-dependent manner. The protein is Valine--tRNA ligase of Mesorhizobium japonicum (strain LMG 29417 / CECT 9101 / MAFF 303099) (Mesorhizobium loti (strain MAFF 303099)).